A 310-amino-acid chain; its full sequence is Flavin-dependent trigonelline monooxygenase, reductase component (310 aa).

FMN is bound by residues 40–43 (TANS), 57–63 (SIAKTSS), 90–91 (FA), and arginine 97.

Belongs to the non-flavoprotein flavin reductase family. As to quaternary structure, homodimer. The trigonelline monooxygenase is composed of a reductase component TgnA and an oxygenase component TgnB.

The enzyme catalyses a reduced flavin + NAD(+) = an oxidized flavin + NADH + 2 H(+). It carries out the reaction FADH2 + NAD(+) = FAD + NADH + 2 H(+). It catalyses the reaction FMNH2 + NAD(+) = FMN + NADH + 2 H(+). Its activity is regulated as follows. Maximal reductase activity is achieved only upon trigonelline (TG) binding to the reductase component before interaction with NADH. It seems that TgnA undergoes an allosteric transition upon trigonelline (TG) binding accounting for the positive cooperativity toward NADH oxidation. Its function is as follows. Involved in the degradation of the pyridine ring of trigonelline (TG; N-methylnicotinate) into succinate and methylamine as carbon and nitrogen sources, respectively. TgnA catalyzes the reduction of flavin (FMN or FAD) by NADH and supplies the reduced flavin to the oxygenase component TgnB. In Acinetobacter baylyi (strain ATCC 33305 / BD413 / ADP1), this protein is Flavin-dependent trigonelline monooxygenase, reductase component.